A 90-amino-acid chain; its full sequence is Nodulation protein F (90 aa).

In terms of domain architecture, Carrier spans 4-89; that stretch reads QLESEIIGII…RHSGSHPRLA (86 aa). Serine 46 carries the post-translational modification O-(pantetheine 4'-phosphoryl)serine. Positions 65–90 are disordered; that stretch reads RDEHGRGVVGSPERRRHSGSHPRLAH. The span at 78–90 shows a compositional bias: basic residues; the sequence is RRRHSGSHPRLAH.

Post-translationally, 4'-phosphopantetheine is transferred from CoA to a specific serine of apo-NodF.

Proposed to synthesize nod factor fatty acyl chain. Involved in trans-2,trans-4,trans-6,cis-11-octadecatetraenoic acid biosynthesis. The protein is Nodulation protein F (nodF) of Rhizobium meliloti (Ensifer meliloti).